The primary structure comprises 330 residues: Polyprenal reductase (330 aa).

The Cytoplasmic segment spans residues 1–16; sequence MAGWAGAELSVLNPLR. Residues 17–37 form a helical membrane-spanning segment; that stretch reads ALWLLLAAAFLLALLLQLAPA. Over 38–89 the chain is Lumenal; that stretch reads RLLPSCALFQDLIRYGKTKQSGSRRPAVCRAFDVPKRYFSHFYVVSVLWNGS. Residues 90-110 traverse the membrane as a helical segment; the sequence is LLWFLSQSLFLGAPFPSWLWA. At 111–136 the chain is on the cytoplasmic side; sequence LLRTLGVTQFQALGMESKASRIQGKK. A helical transmembrane segment spans residues 137–157; it reads LALSTFLVLVFLWVHSLRRLF. The Lumenal portion of the chain corresponds to 158 to 169; the sequence is ECFYVSVFSNTA. The helical transmembrane segment at 170–190 threads the bilayer; sequence IHVVQYCFGLVYYVLVGLTVL. The Cytoplasmic portion of the chain corresponds to 191–206; sequence SQVPMNDKNVYALGKN. Residues 207-227 form a helical membrane-spanning segment; the sequence is LLLQARWFHILGMMMFFWSSA. Residues 228–277 lie on the Lumenal side of the membrane; the sequence is HQYKCHVILSNLRRNKKGVVIHCQHRIPFGDWFEYVSSANYLAELMIYIS. Residues 278 to 298 form a helical membrane-spanning segment; the sequence is MAVTFGLHNVTWWLVVTYVFF. At 299 to 330 the chain is on the cytoplasmic side; the sequence is SQALSAFFNHRFYKSTFVSYPKHRKAFLPFLF.

It belongs to the steroid 5-alpha reductase family. Polyprenal reductase subfamily. In terms of tissue distribution, expressed in the 2 tissues tested i.e. testis and liver.

The protein resides in the endoplasmic reticulum membrane. The enzyme catalyses a di-trans,poly-cis-dolichal + NADP(+) = a di-trans,poly-cis-polyprenal + NADPH + H(+). It carries out the reaction a 3-oxo-5alpha-steroid + NADP(+) = a 3-oxo-Delta(4)-steroid + NADPH + H(+). It catalyses the reaction androst-4-ene-3,17-dione + NADPH + H(+) = 5alpha-androstan-3,17-dione + NADP(+). The catalysed reaction is 17beta-hydroxy-5alpha-androstan-3-one + NADP(+) = testosterone + NADPH + H(+). The protein operates within protein modification; protein glycosylation. Functionally, plays a key role in early steps of protein N-linked glycosylation by being involved in the conversion of polyprenol into dolichol. Acts as a polyprenal reductase that mediates the reduction of polyprenal into dolichal in a NADP-dependent mechanism. Dolichols are required for the synthesis of dolichol-linked monosaccharides and the oligosaccharide precursor used for N-glycosylation. Also able to convert testosterone (T) into 5-alpha-dihydrotestosterone (DHT). The polypeptide is Polyprenal reductase (Rattus norvegicus (Rat)).